Consider the following 922-residue polypeptide: Protein translocase subunit SecA (922 aa).

Residues glutamine 87, 105–109, and aspartate 516 each bind ATP; that span reads GEGKT. A disordered region spans residues 867-912; the sequence is YTAPTETGEPETLPDPRTAGAGGDGLNLPEGVRIGRNDPCPCGSGK. Cysteine 906, cysteine 908, cysteine 917, and histidine 918 together coordinate Zn(2+).

This sequence belongs to the SecA family. In terms of assembly, monomer and homodimer. Part of the essential Sec protein translocation apparatus which comprises SecA, SecYEG and auxiliary proteins SecDF-YajC and YidC. Zn(2+) is required as a cofactor.

It is found in the cell inner membrane. The protein localises to the cytoplasm. It catalyses the reaction ATP + H2O + cellular proteinSide 1 = ADP + phosphate + cellular proteinSide 2.. Functionally, part of the Sec protein translocase complex. Interacts with the SecYEG preprotein conducting channel. Has a central role in coupling the hydrolysis of ATP to the transfer of proteins into and across the cell membrane, serving both as a receptor for the preprotein-SecB complex and as an ATP-driven molecular motor driving the stepwise translocation of polypeptide chains across the membrane. The polypeptide is Protein translocase subunit SecA (Paracidovorax citrulli (strain AAC00-1) (Acidovorax citrulli)).